The sequence spans 369 residues: MFQRYIGLMSGTSMDAVDAALVQIDAQGTPRLEAHHSLSFPPELRTRLLALSHTDNWQADELAGLDIAFSQLSAKVVERLLEKVSIAAKDITAIASHGQTVRHKPNSIPAYTCQIGDPTRLALGTGIDVIYDFRRKDIAAGGQGAPLVPAFHKQVFSRKNQSIAVINLGGIANVTWLGHNGNILGFDTGPANTLLDQWVQHNDSSKSFDENAQFARAGKLQPDLLKRLLQHPFFAKPAPKSTGREEFNLKWLQRQLTGHNISPADVQRTLTELTAISIKDALTTLPQQPDTAYFCGGGTRNPLLMERLTQLLAPIQCDTTASLGVDPQWVEAIAFAWLGWCFEHKKPGNQPEVTGASHPVVLGAKVLHQ.

Residue 11–18 (GTSMDAVD) coordinates ATP.

Belongs to the anhydro-N-acetylmuramic acid kinase family.

The catalysed reaction is 1,6-anhydro-N-acetyl-beta-muramate + ATP + H2O = N-acetyl-D-muramate 6-phosphate + ADP + H(+). It participates in amino-sugar metabolism; 1,6-anhydro-N-acetylmuramate degradation. It functions in the pathway cell wall biogenesis; peptidoglycan recycling. Its function is as follows. Catalyzes the specific phosphorylation of 1,6-anhydro-N-acetylmuramic acid (anhMurNAc) with the simultaneous cleavage of the 1,6-anhydro ring, generating MurNAc-6-P. Is required for the utilization of anhMurNAc either imported from the medium or derived from its own cell wall murein, and thus plays a role in cell wall recycling. The protein is Anhydro-N-acetylmuramic acid kinase of Idiomarina loihiensis (strain ATCC BAA-735 / DSM 15497 / L2-TR).